The following is a 1885-amino-acid chain: Fatty acid synthase subunit alpha (1885 aa).

The segment covering 92–107 (PDPADLAPKETPKQEE) has biased composition (basic and acidic residues). The interval 92-140 (PDPADLAPKETPKQEESTPSAPAAATPTPAAAAAPTPAPAPASAGPVES) is disordered. Residues 108–126 (STPSAPAAATPTPAAAAAP) are compositionally biased toward low complexity. One can recognise a Carrier domain in the interval 146-221 (VKANLLIHVL…EQFQDSFSGQ (76 aa)). Serine 181 carries the post-translational modification O-(pantetheine 4'-phosphoryl)serine. One can recognise a Ketosynthase family 3 (KS3) domain in the interval 1121-1661 (IQEIVVQHDL…QKGAQAVVVH (541 aa)). Active-site for beta-ketoacyl synthase activity residues include cysteine 1304, histidine 1546, and histidine 1587. Mg(2+) is bound by residues aspartate 1771, valine 1772, and glutamate 1773. Acetyl-CoA is bound by residues 1771 to 1773 (DVE), tyrosine 1797, serine 1807, 1816 to 1826 (EAVFKALGVES), 1840 to 1843 (RDVN), and 1870 to 1872 (ISH). Residues serine 1871 and histidine 1872 each coordinate Mg(2+).

It belongs to the thiolase-like superfamily. Fungal fatty acid synthetase subunit alpha family. [Alpha(6)beta(6)] hexamers of two multifunctional subunits (alpha and beta).

The catalysed reaction is acetyl-CoA + n malonyl-CoA + 2n NADPH + 4n H(+) = a long-chain-acyl-CoA + n CoA + n CO2 + 2n NADP(+).. It carries out the reaction a fatty acyl-[ACP] + malonyl-[ACP] + H(+) = a 3-oxoacyl-[ACP] + holo-[ACP] + CO2. It catalyses the reaction a (3R)-hydroxyacyl-[ACP] + NADP(+) = a 3-oxoacyl-[ACP] + NADPH + H(+). In terms of biological role, fatty acid synthetase catalyzes the formation of long-chain fatty acids from acetyl-CoA, malonyl-CoA and NADPH. The alpha subunit contains domains for: acyl carrier protein, 3-oxoacyl-[acyl-carrier-protein] reductase, and 3-oxoacyl-[acyl-carrier-protein] synthase. The sequence is that of Fatty acid synthase subunit alpha (FAS2) from Candida albicans (Yeast).